We begin with the raw amino-acid sequence, 358 residues long: Protein-glutamate methylesterase/protein-glutamine glutaminase 2 (358 aa).

The Response regulatory domain maps to 8 to 125 (RVLIVDDSAV…ARGLEGYAEE (118 aa)). 4-aspartylphosphate is present on Asp-59. One can recognise a CheB-type methylesterase domain in the interval 157–352 (PMPGSALRFR…LDRVAERLLA (196 aa)). Catalysis depends on residues Ser-177, His-203, and Asp-299.

The protein belongs to the CheB family. In terms of processing, phosphorylated by CheA. Phosphorylation of the N-terminal regulatory domain activates the methylesterase activity.

Its subcellular location is the cytoplasm. It catalyses the reaction [protein]-L-glutamate 5-O-methyl ester + H2O = L-glutamyl-[protein] + methanol + H(+). The catalysed reaction is L-glutaminyl-[protein] + H2O = L-glutamyl-[protein] + NH4(+). In terms of biological role, involved in chemotaxis. Part of a chemotaxis signal transduction system that modulates chemotaxis in response to various stimuli. Catalyzes the demethylation of specific methylglutamate residues introduced into the chemoreceptors (methyl-accepting chemotaxis proteins or MCP) by CheR. Also mediates the irreversible deamidation of specific glutamine residues to glutamic acid. The chain is Protein-glutamate methylesterase/protein-glutamine glutaminase 2 from Xanthomonas oryzae pv. oryzae (strain MAFF 311018).